A 760-amino-acid chain; its full sequence is 5-methyltetrahydropteroyltriglutamate--homocysteine methyltransferase (760 aa).

Residues 15–18 and K114 each bind 5-methyltetrahydropteroyltri-L-glutamate; that span reads RELK. Residues 436–438 and E489 each bind L-homocysteine; that span reads IGS. L-methionine contacts are provided by residues 436 to 438 and E489; that span reads IGS. 5-methyltetrahydropteroyltri-L-glutamate is bound by residues 520-521 and W566; that span reads RC. D604 provides a ligand contact to L-homocysteine. D604 is an L-methionine binding site. Residue E610 coordinates 5-methyltetrahydropteroyltri-L-glutamate. Zn(2+) contacts are provided by H646, C648, and E670. H699 functions as the Proton donor in the catalytic mechanism. Residue C731 participates in Zn(2+) binding.

The protein belongs to the vitamin-B12 independent methionine synthase family. The cofactor is Zn(2+).

It carries out the reaction 5-methyltetrahydropteroyltri-L-glutamate + L-homocysteine = tetrahydropteroyltri-L-glutamate + L-methionine. It functions in the pathway amino-acid biosynthesis; L-methionine biosynthesis via de novo pathway; L-methionine from L-homocysteine (MetE route): step 1/1. Its function is as follows. Catalyzes the transfer of a methyl group from 5-methyltetrahydrofolate to homocysteine resulting in methionine formation. The chain is 5-methyltetrahydropteroyltriglutamate--homocysteine methyltransferase from Shewanella oneidensis (strain ATCC 700550 / JCM 31522 / CIP 106686 / LMG 19005 / NCIMB 14063 / MR-1).